The following is a 421-amino-acid chain: Mannose-1-phosphate guanylyltransferase regulatory subunit alpha (421 aa).

A substrate-binding domain region spans residues 2–252 (LKAVILIGGP…EGCWSQIKSA (251 aa)). GDP-alpha-D-mannose is bound by residues Glu-85 and Gln-248. Positions 274 to 421 (LASTKEGGPT…SRSFKNQIIL (148 aa)) are hexapeptide repeat domain. Positions 357-385 (TPSDPNPNDPYSKIDSETLFREGKLTPSI) are C-loop.

The protein belongs to the transferase hexapeptide repeat family. Component of the GMPPA-GMPPB mannose-1-phosphate guanylyltransferase complex composed of 4 gmppa subunits and 8 gmppb subunits; the complex is organized into three layers, a central layer made up of 2 gmppa dimers sandwiched between two layers each made up of 2 gmppb dimers.

The protein localises to the cytoplasm. Regulatory subunit of the GMPPA-GMPPB mannose-1-phosphate guanylyltransferase complex; reduces the catalytic activity of GMPPB when part of the complex. Mediates allosteric feedback inhibition of GMPPB catalytic activity upon binding GDP-alpha-D-mannose. Together with GMPPB regulates GDP-alpha-D-mannose levels. The sequence is that of Mannose-1-phosphate guanylyltransferase regulatory subunit alpha (gmppa) from Xenopus tropicalis (Western clawed frog).